The chain runs to 200 residues: Probable GTP-binding protein EngB (200 aa).

Positions N22–S197 constitute an EngB-type G domain. Residues G30–S37, G57–L61, D75–G78, T142–D145, and H173–S178 each bind GTP. Residues S37 and T59 each contribute to the Mg(2+) site.

It belongs to the TRAFAC class TrmE-Era-EngA-EngB-Septin-like GTPase superfamily. EngB GTPase family. Mg(2+) serves as cofactor.

Necessary for normal cell division and for the maintenance of normal septation. The sequence is that of Probable GTP-binding protein EngB from Phocaeicola vulgatus (strain ATCC 8482 / DSM 1447 / JCM 5826 / CCUG 4940 / NBRC 14291 / NCTC 11154) (Bacteroides vulgatus).